The chain runs to 495 residues: Glycogen synthase (495 aa).

Residue Lys-24 participates in ADP-alpha-D-glucose binding.

This sequence belongs to the glycosyltransferase 1 family. Bacterial/plant glycogen synthase subfamily.

The catalysed reaction is [(1-&gt;4)-alpha-D-glucosyl](n) + ADP-alpha-D-glucose = [(1-&gt;4)-alpha-D-glucosyl](n+1) + ADP + H(+). It functions in the pathway glycan biosynthesis; glycogen biosynthesis. In terms of biological role, synthesizes alpha-1,4-glucan chains using ADP-glucose. The polypeptide is Glycogen synthase (Nitrosomonas europaea (strain ATCC 19718 / CIP 103999 / KCTC 2705 / NBRC 14298)).